We begin with the raw amino-acid sequence, 620 residues long: Sodium-dependent dopamine transporter (620 aa).

Over 1–56 (MSKSKCSVGLMSSVVAPAKEPNAMGPKEVELILVKEQNGVQLTSSTLTNPRQSPVE) the chain is Cytoplasmic. The discontinuously helical transmembrane segment at 57–95 (AQDRETWGKKIDFLLSVIGFAVDLANVWRFPYLCYKNGG) threads the bilayer. Na(+) is bound by residues Gly-75, Ala-77, Val-78, Asp-79, and Asn-82. Asp-79 lines the dopamine pocket. The next 2 helical transmembrane spans lie at 96–127 (GAFLVPYLLFMVIAGMPLFYMELALGQFNREG) and 128–171 (AAGV…FSSF). The dopamine site is built by Ser-149 and Gly-153. Topologically, residues 172–236 (TTELPWIHCN…SHGIDDLGPP (65 aa)) are extracellular. A disulfide bridge connects residues Cys-180 and Cys-189. Residues Asn-181, Asn-188, and Asn-205 are each glycosylated (N-linked (GlcNAc...) asparagine). The next 2 membrane-spanning stretches (helical) occupy residues 237–256 (RWQLTACLVLVIVLLYFSLW) and 257–287 (KGVKTSGKVVWITATMPYVVLTALLLRGVTL). Residues 288-306 (PGAIDGIRAYLSVDFYRLC) lie on the Extracellular side of the membrane. A discontinuously helical membrane pass occupies residues 307–335 (EASVWIDAATQVCFSLGVGFGVLIAFSSY). Position 317 (Gln-317) interacts with chloride. Residue Phe-320 coordinates dopamine. 2 residues coordinate Na(+): Ser-321 and Asn-353. Residue Ser-321 participates in chloride binding. The helical transmembrane segment at 336–376 (NKFTNNCYRDAIVTTSINSLTSFSSGFVVFSFLGYMAQKHS) threads the bilayer. Position 357 (Ser-357) interacts with chloride. Over 377–400 (VPIGDVAKDGPGLIFIIYPEAIAT) the chain is Extracellular. The next 3 helical transmembrane spans lie at 401–442 (LPLS…QLLH), 443–466 (RHRELFTLFIVLATFLLSLFCVTN), and 467–499 (GGIYVFTLLDHFAAGTSILFGVLIEAIGVAWFY). Residues Leu-418, Asp-421, and Ser-422 each contribute to the Na(+) site. Ser-422 and Ala-423 together coordinate dopamine. The Cytoplasmic segment spans residues 500–516 (GVGQFSDDIQQMTGQRP). Residues 517–542 (SLYWRLCWKLVSPCFLLFVVVVSIVT) form a helical membrane-spanning segment. The Extracellular portion of the chain corresponds to 543-553 (FRPPHYGAYIF). The helical transmembrane segment at 554–583 (PDWANALGWVIATSSMAMVPIYAAYKFCSL) threads the bilayer. Residues 561-590 (GWVIATSSMAMVPIYAAYKFCSLPGSFREK) form an interaction with TGFB1I1 region. At 584 to 620 (PGSFREKLAYAIAPEKDRELVDRGEVRQFTLRHWLKV) the chain is on the cytoplasmic side.

Belongs to the sodium:neurotransmitter symporter (SNF) (TC 2.A.22) family. SLC6A3 subfamily. As to quaternary structure, monomer. Homooligomer; disulfide-linked. Interacts with PRKCABP and TGFB1I1. Interacts (via N-terminus) with SYNGR3 (via N-terminus). Interacts with SLC18A2. Interacts with TOR1A (ATP-bound); TOR1A regulates SLC6A3 subcellular location. Interacts with alpha-synuclein/SNCA. Interacts with SEPTIN4.

Its subcellular location is the cell membrane. It is found in the cell projection. The protein localises to the neuron projection. It localises to the axon. The catalysed reaction is dopamine(out) + chloride(out) + Na(+)(out) = dopamine(in) + chloride(in) + Na(+)(in). The enzyme catalyses (R)-noradrenaline(out) + chloride(out) + Na(+)(out) = (R)-noradrenaline(in) + chloride(in) + Na(+)(in). It catalyses the reaction dopamine(out) + chloride(out) + 2 Na(+)(out) = dopamine(in) + chloride(in) + 2 Na(+)(in). With respect to regulation, inhibited by zinc ions. Its function is as follows. Mediates sodium- and chloride-dependent transport of dopamine. Also mediates sodium- and chloride-dependent transport of norepinephrine (also known as noradrenaline). Regulator of light-dependent retinal hyaloid vessel regression, downstream of OPN5 signaling. This Macaca fascicularis (Crab-eating macaque) protein is Sodium-dependent dopamine transporter (SLC6A3).